A 135-amino-acid polypeptide reads, in one-letter code: Putative pre-16S rRNA nuclease (135 aa).

It belongs to the YqgF nuclease family.

It is found in the cytoplasm. Functionally, could be a nuclease involved in processing of the 5'-end of pre-16S rRNA. This Clostridium acetobutylicum (strain ATCC 824 / DSM 792 / JCM 1419 / IAM 19013 / LMG 5710 / NBRC 13948 / NRRL B-527 / VKM B-1787 / 2291 / W) protein is Putative pre-16S rRNA nuclease.